We begin with the raw amino-acid sequence, 194 residues long: Peptidyl-tRNA hydrolase (194 aa).

Tyr-17 is a tRNA binding site. The active-site Proton acceptor is the His-22. TRNA contacts are provided by Tyr-68, Asn-70, and Asn-116.

The protein belongs to the PTH family. Monomer.

The protein localises to the cytoplasm. It catalyses the reaction an N-acyl-L-alpha-aminoacyl-tRNA + H2O = an N-acyl-L-amino acid + a tRNA + H(+). In terms of biological role, hydrolyzes ribosome-free peptidyl-tRNAs (with 1 or more amino acids incorporated), which drop off the ribosome during protein synthesis, or as a result of ribosome stalling. Functionally, catalyzes the release of premature peptidyl moieties from peptidyl-tRNA molecules trapped in stalled 50S ribosomal subunits, and thus maintains levels of free tRNAs and 50S ribosomes. This Pseudomonas fluorescens (strain ATCC BAA-477 / NRRL B-23932 / Pf-5) protein is Peptidyl-tRNA hydrolase.